Consider the following 101-residue polypeptide: Putative pterin-4-alpha-carbinolamine dehydratase (101 aa).

It belongs to the pterin-4-alpha-carbinolamine dehydratase family.

The enzyme catalyses (4aS,6R)-4a-hydroxy-L-erythro-5,6,7,8-tetrahydrobiopterin = (6R)-L-erythro-6,7-dihydrobiopterin + H2O. This Streptomyces coelicolor (strain ATCC BAA-471 / A3(2) / M145) protein is Putative pterin-4-alpha-carbinolamine dehydratase.